A 208-amino-acid chain; its full sequence is Pyrophosphate-energized proton pump 2 (208 aa).

Helical transmembrane passes span Ala19–Val39, Gly54–Ile74, Gly89–Ile109, Leu140–Ala160, and Leu167–Leu187.

Belongs to the H(+)-translocating pyrophosphatase (TC 3.A.10) family. Homodimer. Mg(2+) serves as cofactor.

Its subcellular location is the cell inner membrane. The enzyme catalyses diphosphate + H2O + H(+)(in) = 2 phosphate + 2 H(+)(out). Its function is as follows. Proton pump that utilizes the energy of pyrophosphate hydrolysis as the driving force for proton movement across the membrane. Generates a proton motive force. This is Pyrophosphate-energized proton pump 2 (hppA2) from Mycoplana dimorpha.